A 520-amino-acid chain; its full sequence is GMP synthase [glutamine-hydrolyzing] (520 aa).

Residues 12–202 form the Glutamine amidotransferase type-1 domain; it reads KIIVLDFGSQ…AFDVCGCTGD (191 aa). Cysteine 89 acts as the Nucleophile in catalysis. Active-site residues include histidine 176 and glutamate 178. The GMPS ATP-PPase domain occupies 203–395; that stretch reads WSMENFIDME…LGMPDAIVWR (193 aa). ATP is bound at residue 230–236; that stretch reads SGGVDSS.

As to quaternary structure, homodimer.

It carries out the reaction XMP + L-glutamine + ATP + H2O = GMP + L-glutamate + AMP + diphosphate + 2 H(+). It participates in purine metabolism; GMP biosynthesis; GMP from XMP (L-Gln route): step 1/1. Its function is as follows. Catalyzes the synthesis of GMP from XMP. The sequence is that of GMP synthase [glutamine-hydrolyzing] from Enterococcus faecalis (strain ATCC 700802 / V583).